We begin with the raw amino-acid sequence, 364 residues long: Probable zinc transporter 10 (364 aa).

The first 28 residues, 1–28 (MTKSHVIFSASIALFLLLSISHFPGALS), serve as a signal peptide directing secretion. The Extracellular segment spans residues 29-52 (QSNKDCQSKSNYSCIDKNKALDLK). The helical transmembrane segment at 53–73 (LLSIFSILITSLIGVCLPFFA) threads the bilayer. Over 74–85 (RSIPAFQPEKSH) the chain is Cytoplasmic. The chain crosses the membrane as a helical span at residues 86 to 106 (FLIVKSFASGIILSTGFMHVL). Residues 107 to 125 (PDSFEMLSSPCLNDNPWHK) are Extracellular-facing. Residues 126-146 (FPFAGFVAMMSAVFTLMVDSI) traverse the membrane as a helical segment. The Cytoplasmic segment spans residues 147 to 209 (TTSVFTKSGR…GSYLQLLRYR (63 aa)). Residues 210 to 230 (ILAIVLELGIVVQSIVIGLSV) traverse the membrane as a helical segment. Over 231 to 241 (GDTNNTCTIKG) the chain is Extracellular. A helical membrane pass occupies residues 242-262 (LVAALCFHQMFEGMGLGGCIL). The Cytoplasmic portion of the chain corresponds to 263–271 (QAEYGWVKK). Residues 272-292 (AVMAFFFAVTTPFGVVLGMAL) traverse the membrane as a helical segment. Residues 293 to 303 (SKTYKENSPES) are Extracellular-facing. Residues 304–324 (LITVGLLNASSAGLLIYMALV) form a helical membrane-spanning segment. Topologically, residues 325–343 (DLLAADFMGQKMQRSIKLQ) are cytoplasmic. Residues 344 to 364 (LKSYAAVLLGAGGMSVMAKWA) traverse the membrane as a helical segment.

This sequence belongs to the ZIP transporter (TC 2.A.5) family.

It is found in the cell membrane. Probably mediates zinc uptake from the rhizosphere. The polypeptide is Probable zinc transporter 10 (ZIP10) (Arabidopsis thaliana (Mouse-ear cress)).